The chain runs to 307 residues: MSGKAGFTPEDPEDSDNRHGNPLFEGIFTALNWMTVLPVPGASVFDRTTGARVMASLPFVGFVFGMFTAIIMWAIGPISGVIHVDGLLVAVLIVAFWELLNRFMHLDGLADVSDALGSYAAPPRAREILADPRTGLFGLATAMLSVLLQVAAVASLVDSTVWWMICFIPVLGRIAGQVTALKNHNAFSPTGFGALVIGTVKFWWIALWLLVTAALAFWCAELISPLSPLTSVNTPFVAGPFPAAINPAWLGGWVAITAVVACVFAALFSRRLSRSFGGLNGDCIGACIHLGASISAVMFAVVANAMV.

Transmembrane regions (helical) follow at residues 22 to 42 (PLFE…VPGA), 58 to 78 (PFVG…IGPI), 80 to 100 (GVIH…WELL), 137 to 157 (FGLA…ASLV), 161 to 181 (VWWM…VTAL), 212 to 232 (TAAL…LTSV), 248 to 268 (AWLG…AALF), and 283 to 303 (CIGA…AVVA).

This sequence belongs to the CobS family. The cofactor is Mg(2+).

The protein localises to the cell membrane. The enzyme catalyses alpha-ribazole + adenosylcob(III)inamide-GDP = adenosylcob(III)alamin + GMP + H(+). The catalysed reaction is alpha-ribazole 5'-phosphate + adenosylcob(III)inamide-GDP = adenosylcob(III)alamin 5'-phosphate + GMP + H(+). It participates in cofactor biosynthesis; adenosylcobalamin biosynthesis; adenosylcobalamin from cob(II)yrinate a,c-diamide: step 7/7. In terms of biological role, joins adenosylcobinamide-GDP and alpha-ribazole to generate adenosylcobalamin (Ado-cobalamin). Also synthesizes adenosylcobalamin 5'-phosphate from adenosylcobinamide-GDP and alpha-ribazole 5'-phosphate. The sequence is that of Adenosylcobinamide-GDP ribazoletransferase from Corynebacterium glutamicum (strain ATCC 13032 / DSM 20300 / JCM 1318 / BCRC 11384 / CCUG 27702 / LMG 3730 / NBRC 12168 / NCIMB 10025 / NRRL B-2784 / 534).